Consider the following 241-residue polypeptide: Methylthioribulose-1-phosphate dehydratase (241 aa).

A substrate-binding site is contributed by C102. Residues H120, H122, and H199 each coordinate Zn(2+).

Belongs to the aldolase class II family. MtnB subfamily. Zn(2+) serves as cofactor.

It is found in the cytoplasm. The enzyme catalyses 5-(methylsulfanyl)-D-ribulose 1-phosphate = 5-methylsulfanyl-2,3-dioxopentyl phosphate + H2O. It participates in amino-acid biosynthesis; L-methionine biosynthesis via salvage pathway; L-methionine from S-methyl-5-thio-alpha-D-ribose 1-phosphate: step 2/6. Its function is as follows. Catalyzes the dehydration of methylthioribulose-1-phosphate (MTRu-1-P) into 2,3-diketo-5-methylthiopentyl-1-phosphate (DK-MTP-1-P). This is Methylthioribulose-1-phosphate dehydratase from Coprinopsis cinerea (strain Okayama-7 / 130 / ATCC MYA-4618 / FGSC 9003) (Inky cap fungus).